We begin with the raw amino-acid sequence, 545 residues long: Ribulokinase (545 aa).

Belongs to the ribulokinase family.

It carries out the reaction D-ribulose + ATP = D-ribulose 5-phosphate + ADP + H(+). The catalysed reaction is L-ribulose + ATP = L-ribulose 5-phosphate + ADP + H(+). Its pathway is carbohydrate degradation; L-arabinose degradation via L-ribulose; D-xylulose 5-phosphate from L-arabinose (bacterial route): step 2/3. This Staphylococcus aureus (strain MSSA476) protein is Ribulokinase.